The primary structure comprises 759 residues: LON peptidase N-terminal domain and RING finger protein 3 (759 aa).

The disordered stretch occupies residues 1 to 69 (MESVRIEQML…PGTSTPESKV (69 aa)). A compositionally biased stretch (polar residues) spans 57-66 (EQSPGTSTPE). The stretch at 67-100 (SKVLLTQADALASRGRIREALEVYRQLSERQQLV) is one TPR 1 repeat. The RING-type 1 zinc-finger motif lies at 158–196 (CRKCHGFLSDPVSLSCGHTFCKLCLERGRAADRRCALCG). TPR repeat units follow at residues 243 to 276 (ASQL…APND), 278 to 310 (LLYS…RPMG), and 312 to 344 (KAHF…DGKN). The interval 360 to 454 (HCSSQEEAAA…TDQGDKPALS (95 aa)) is disordered. Over residues 380–393 (AKVKGDGQQHHMKD) the composition is skewed to basic and acidic residues. Residues 467–505 (CALCMRLFYEPVTTPCGHTFCLKCLERCLDHNAKCPLCK) form an RING-type 2 zinc finger. The 210-residue stretch at 546–755 (MEELSNLNKN…GIRRVLAFIS (210 aa)) folds into the Lon N-terminal domain.

The sequence is that of LON peptidase N-terminal domain and RING finger protein 3 (LONRF3) from Homo sapiens (Human).